The following is a 207-amino-acid chain: MIOREX complex component 11 (207 aa).

A mitochondrion-targeting transit peptide spans 1-46 (MTVMNLFFRPCQLQMGSGPLELMLKRPTQLTTFMNTRPGGSTQIRF). Residues 47 to 98 (ISGNLDPVKRREDRLRKIFSKSRLLTRLNKNPKFSHYFDRLSEAGTVPTLTS) lie on the Mitochondrial matrix side of the membrane. The helical transmembrane segment at 99–119 (FFILHEVTAILPLFLLWWLLY) threads the bilayer. The Mitochondrial intermembrane portion of the chain corresponds to 120–177 (NLDLSDDFKLPNFLNGLMDSCHTAMEKFVGKRYQECLNKNKLILSGTVAYVTVKLLYP). The chain crosses the membrane as a helical span at residues 178–198 (VRIFISIWGAPYFGKWLLLPF). The Mitochondrial matrix segment spans residues 199-207 (QKLKHLIKK).

This sequence belongs to the MRX11 family. Associates with the mitochondrial ribosome.

The protein localises to the mitochondrion. The protein resides in the mitochondrion inner membrane. Component of MIOREX complexes, large expressome-like assemblies of ribosomes with factors involved in all the steps of post-transcriptional gene expression. The polypeptide is MIOREX complex component 11 (Saccharomyces cerevisiae (strain ATCC 204508 / S288c) (Baker's yeast)).